The primary structure comprises 104 residues: Large ribosomal subunit protein uL23 (104 aa).

It belongs to the universal ribosomal protein uL23 family. As to quaternary structure, part of the 50S ribosomal subunit. Contacts protein L29, and trigger factor when it is bound to the ribosome.

One of the early assembly proteins it binds 23S rRNA. One of the proteins that surrounds the polypeptide exit tunnel on the outside of the ribosome. Forms the main docking site for trigger factor binding to the ribosome. The polypeptide is Large ribosomal subunit protein uL23 (Polynucleobacter asymbioticus (strain DSM 18221 / CIP 109841 / QLW-P1DMWA-1) (Polynucleobacter necessarius subsp. asymbioticus)).